We begin with the raw amino-acid sequence, 532 residues long: MIRNLTKLTKFTIGNRFYQSSSKGRFSGKNGNNAFKSIVGVSVGVSALFAGCVFLDQEKEPESTPSIDVKEKKSQPPKTKEDYQKKMDEEYDIEQFKYVIIGGGTAAYHAIDKILENDKEATILLISKEYEVPYQRPPLTKSLWATKDDNVVNTLNFSDWSGKKQNLLYEQESAYGNEILQFIRTKKVIDLHIDEKLVLLNDGKLIRYDKCLIATGGEPRQLKFTSTNDKKISTYRTVEDFRKLYEVVKDGGKHVTVLGGGFLGSELTCAINSNFQDKNIKIDQIFPESGVLSTLFPDYLSKYATEEIIKSGVNVHTGTLIKDVVDNSENGRLTVTLNNGKTFETDHVVVAAGIIPNTNVVKSTTLEIDPINGGYVVNPELQARTDLYVAGDVASYYDFSLGVRRRVEHHDHARATGEMAGSNMSTKDTPAPYTYQPFFWSDLTPGVGFEAVGNTSSKLKTFSVWEKPSSDETKQSYTKGNIYYLNDNNNVVGVLCYGNYGKMDTARDLILKRRTIEDLNQLQHAIDFDEHH.

Residues 1-26 (MIRNLTKLTKFTIGNRFYQSSSKGRF) constitute a mitochondrion transit peptide. The interval 63-84 (STPSIDVKEKKSQPPKTKEDYQ) is disordered. Positions 98–440 (YVIIGGGTAA…APYTYQPFFW (343 aa)) are FAD-dependent oxidoreductase. Residues 102-106 (GGGTA), 128-129 (KE), R136, and K141 contribute to the FAD site. NAD(+) is bound at residue W160. Positions 188 and 236 each coordinate FAD. NAD(+)-binding positions include 260–263 (GGFL), E288, and G353. Position 392 (D392) interacts with FAD. Positions 400 to 406 (SLGVRRR) match the Nuclear localization signal motif. NAD(+) is bound by residues 408 to 409 (EH), W440, and E450. FAD is bound by residues 409 to 410 (HH) and W440.

Belongs to the FAD-dependent oxidoreductase family. FAD serves as cofactor.

Its subcellular location is the mitochondrion. The protein localises to the cytoplasm. It localises to the nucleus. The enzyme catalyses A + NADH + H(+) = AH2 + NAD(+). Functionally, probable NADH oxidoreductase that acts as a caspase-independent mitochondrial effector of apoptotic cell death. The sequence is that of Apoptosis-inducing factor 1, mitochondrial (aif) from Dictyostelium discoideum (Social amoeba).